The following is a 440-amino-acid chain: Methionine aminopeptidase 2-2 (440 aa).

The segment at Met-1–Glu-102 is disordered. The span at Asp-36 to Glu-46 shows a compositional bias: acidic residues. A compositionally biased stretch (basic residues) spans Ala-56–Ser-70. His-194 serves as a coordination point for substrate. A divalent metal cation contacts are provided by Asp-214, Asp-225, and His-294. Residue His-302 coordinates substrate. 2 residues coordinate a divalent metal cation: Glu-327 and Glu-421.

The protein belongs to the peptidase M24A family. Methionine aminopeptidase eukaryotic type 2 subfamily. The cofactor is Co(2+). Zn(2+) serves as cofactor. Requires Mn(2+) as cofactor. It depends on Fe(2+) as a cofactor.

It localises to the cytoplasm. The catalysed reaction is Release of N-terminal amino acids, preferentially methionine, from peptides and arylamides.. In terms of biological role, cotranslationally removes the N-terminal methionine from nascent proteins. The N-terminal methionine is often cleaved when the second residue in the primary sequence is small and uncharged (Met-Ala-, Cys, Gly, Pro, Ser, Thr, or Val). The protein is Methionine aminopeptidase 2-2 of Colletotrichum graminicola (strain M1.001 / M2 / FGSC 10212) (Maize anthracnose fungus).